Here is a 303-residue protein sequence, read N- to C-terminus: Terpene synthase (303 aa).

2 residues coordinate Mg(2+): Asp69 and Asp73. A DDXXD motif motif is present at residues 69–73; it reads DDIQD.

Belongs to the FPP/GGPP synthase family. Mg(2+) is required as a cofactor.

The catalysed reaction is (2E)-geranyl diphosphate + H2O = (2E)-geraniol + diphosphate. In terms of biological role, terpene synthase that is able to convert geraniol diphosphate to geraniol in tea leaves. The chain is Terpene synthase from Matsumurasca onukii (Tea green leafhopper).